Consider the following 281-residue polypeptide: ATP phosphoribosyltransferase (281 aa).

The protein belongs to the ATP phosphoribosyltransferase family. Long subfamily. It depends on Mg(2+) as a cofactor.

The protein localises to the cytoplasm. It carries out the reaction 1-(5-phospho-beta-D-ribosyl)-ATP + diphosphate = 5-phospho-alpha-D-ribose 1-diphosphate + ATP. The protein operates within amino-acid biosynthesis; L-histidine biosynthesis; L-histidine from 5-phospho-alpha-D-ribose 1-diphosphate: step 1/9. Feedback inhibited by histidine. Its function is as follows. Catalyzes the condensation of ATP and 5-phosphoribose 1-diphosphate to form N'-(5'-phosphoribosyl)-ATP (PR-ATP). Has a crucial role in the pathway because the rate of histidine biosynthesis seems to be controlled primarily by regulation of HisG enzymatic activity. The chain is ATP phosphoribosyltransferase (hisG) from Archaeoglobus fulgidus (strain ATCC 49558 / DSM 4304 / JCM 9628 / NBRC 100126 / VC-16).